We begin with the raw amino-acid sequence, 180 residues long: 4-hydroxy-3-methylbut-2-enyl diphosphate reductase (180 aa).

Cys12 serves as a coordination point for [4Fe-4S] cluster. Residues His41 and His74 each contribute to the (2E)-4-hydroxy-3-methylbut-2-enyl diphosphate site. His41 and His74 together coordinate dimethylallyl diphosphate. Residues His41 and His74 each contribute to the isopentenyl diphosphate site. Cys96 lines the [4Fe-4S] cluster pocket. Position 124 (His124) interacts with (2E)-4-hydroxy-3-methylbut-2-enyl diphosphate. A dimethylallyl diphosphate-binding site is contributed by His124. His124 lines the isopentenyl diphosphate pocket. Glu126 (proton donor) is an active-site residue. Thr168 serves as a coordination point for (2E)-4-hydroxy-3-methylbut-2-enyl diphosphate.

The protein belongs to the IspH family. Requires [4Fe-4S] cluster as cofactor.

The enzyme catalyses isopentenyl diphosphate + 2 oxidized [2Fe-2S]-[ferredoxin] + H2O = (2E)-4-hydroxy-3-methylbut-2-enyl diphosphate + 2 reduced [2Fe-2S]-[ferredoxin] + 2 H(+). It carries out the reaction dimethylallyl diphosphate + 2 oxidized [2Fe-2S]-[ferredoxin] + H2O = (2E)-4-hydroxy-3-methylbut-2-enyl diphosphate + 2 reduced [2Fe-2S]-[ferredoxin] + 2 H(+). Its pathway is isoprenoid biosynthesis; dimethylallyl diphosphate biosynthesis; dimethylallyl diphosphate from (2E)-4-hydroxy-3-methylbutenyl diphosphate: step 1/1. It functions in the pathway isoprenoid biosynthesis; isopentenyl diphosphate biosynthesis via DXP pathway; isopentenyl diphosphate from 1-deoxy-D-xylulose 5-phosphate: step 6/6. Functionally, catalyzes the conversion of 1-hydroxy-2-methyl-2-(E)-butenyl 4-diphosphate (HMBPP) into a mixture of isopentenyl diphosphate (IPP) and dimethylallyl diphosphate (DMAPP). Acts in the terminal step of the DOXP/MEP pathway for isoprenoid precursor biosynthesis. The protein is 4-hydroxy-3-methylbut-2-enyl diphosphate reductase of Pseudomonas fluorescens.